The following is a 508-amino-acid chain: Cobyric acid synthase (508 aa).

One can recognise a GATase cobBQ-type domain in the interval 255-454 (ELNIAVLKLP…LHGVFESGPW (200 aa)). The active-site Nucleophile is the Cys336. The active site involves His446.

This sequence belongs to the CobB/CobQ family. CobQ subfamily.

It functions in the pathway cofactor biosynthesis; adenosylcobalamin biosynthesis. Functionally, catalyzes amidations at positions B, D, E, and G on adenosylcobyrinic A,C-diamide. NH(2) groups are provided by glutamine, and one molecule of ATP is hydrogenolyzed for each amidation. The protein is Cobyric acid synthase of Synechococcus sp. (strain CC9311).